Here is a 1678-residue protein sequence, read N- to C-terminus: Serine/threonine-protein kinase pakD (1678 aa).

The segment covering 1-15 (MSRLQPQQQQRGRSS) has biased composition (low complexity). 4 disordered regions span residues 1–73 (MSRL…NNKF), 180–224 (NSNS…PNKN), 262–428 (QLSS…NNNN), and 442–489 (KRKS…SQSS). The span at 17–34 (FKDNFQIQKPLQSLTPSE) shows a compositional bias: polar residues. 2 stretches are compositionally biased toward low complexity: residues 35 to 73 (QQQQ…NNKF) and 180 to 214 (NSNS…NNNN). The Calponin-homology (CH) domain maps to 82 to 189 (KNVENDIKKW…NSNSSKTTTN (108 aa)). The segment covering 215 to 224 (RAIITSPNKN) has biased composition (polar residues). Composition is skewed to low complexity over residues 276-359 (NNNN…NINN) and 399-428 (NNNN…NNNN). The segment covering 460-472 (DSSDSSDSSDSDS) has biased composition (acidic residues). Coiled-coil stretches lie at residues 512–542 (KQDK…KKLL) and 570–628 (TRQI…YANT). 3 stretches are compositionally biased toward low complexity: residues 631–654 (SSNS…INGS), 662–671 (NSSTSKGTLS), and 695–713 (NSHQ…QTTS). Disordered stretches follow at residues 631-672 (SSNS…TLSR) and 693-722 (PVNS…ASYN). Residues 752–862 (VSATLQQKQQ…QNQQINNLID (111 aa)) are a coiled coil. The segment at 1141–1197 (PHSFVLKSFRIISECNYCRQYIWGVRGIVAREAFECVGCKYKTHKKCLKEASEKTFC) adopts a Phorbol-ester/DAG-type zinc-finger fold. A CRIB domain is found at 1202 to 1215 (VGAPFNVKHEMHVG). 2 disordered regions span residues 1267–1292 (LTNN…QQNQ) and 1323–1346 (NNTY…PNNN). Residues 1269 to 1309 (NNSNNNNNNNNSNNNLQQQQQQNQQLKQKLNITNNQQNNTI) are a coiled coil. In terms of domain architecture, Protein kinase spans 1376–1647 (YKVREVVGGG…AHYLLRHPFL (272 aa)). Residues 1382–1390 (VGGGSTGKV) and Lys-1405 each bind ATP. The active-site Proton acceptor is the Asp-1515.

It belongs to the protein kinase superfamily. STE Ser/Thr protein kinase family. STE20 subfamily. It depends on Mg(2+) as a cofactor.

The catalysed reaction is L-seryl-[protein] + ATP = O-phospho-L-seryl-[protein] + ADP + H(+). The enzyme catalyses L-threonyl-[protein] + ATP = O-phospho-L-threonyl-[protein] + ADP + H(+). This chain is Serine/threonine-protein kinase pakD, found in Dictyostelium discoideum (Social amoeba).